The primary structure comprises 525 residues: GMP synthase [glutamine-hydrolyzing] (525 aa).

Residues 9 to 207 (RILILDFGSQ…ILDICGCEAL (199 aa)) form the Glutamine amidotransferase type-1 domain. Catalysis depends on C86, which acts as the Nucleophile. Active-site residues include H181 and E183. In terms of domain architecture, GMPS ATP-PPase spans 208–400 (WTPSKIAEDA…LGLPYDMVYR (193 aa)). An ATP-binding site is contributed by 235 to 241 (SGGVDSS).

As to quaternary structure, homodimer.

The enzyme catalyses XMP + L-glutamine + ATP + H2O = GMP + L-glutamate + AMP + diphosphate + 2 H(+). It participates in purine metabolism; GMP biosynthesis; GMP from XMP (L-Gln route): step 1/1. In terms of biological role, catalyzes the synthesis of GMP from XMP. The polypeptide is GMP synthase [glutamine-hydrolyzing] (Pseudomonas fluorescens (strain ATCC BAA-477 / NRRL B-23932 / Pf-5)).